The primary structure comprises 574 residues: Pyruvate kinase PKLR (574 aa).

A phosphoserine mark is found at S2, S19, S26, and S43. R116 is a substrate binding site. K(+) is bound by residues N118, S120, D156, and T157. 118–121 is a binding site for ATP; sequence NFSH. ATP is bound by residues R163 and K250. At S292 the chain carries Phosphoserine. K313 contacts substrate. Residue E315 coordinates Mn(2+). Positions 338, 339, and 371 each coordinate substrate. D339 is a Mn(2+) binding site. Beta-D-fructose 1,6-bisphosphate-binding positions include 475–480, W525, R532, and 559–564; these read TKTGRS and RPGSGY.

This sequence belongs to the pyruvate kinase family. Homotetramer. Mg(2+) serves as cofactor. It depends on Mn(2+) as a cofactor. The cofactor is K(+).

It carries out the reaction pyruvate + ATP = phosphoenolpyruvate + ADP + H(+). The protein operates within carbohydrate degradation; glycolysis; pyruvate from D-glyceraldehyde 3-phosphate: step 5/5. Allosterically activated by fructose 1,6-bisphosphate. Its function is as follows. Pyruvate kinase that catalyzes the conversion of phosphoenolpyruvate to pyruvate with the synthesis of ATP, and which plays a key role in glycolysis. This Rattus norvegicus (Rat) protein is Pyruvate kinase PKLR (Pklr).